A 377-amino-acid chain; its full sequence is All-trans-retinol dehydrogenase [NAD(+)] ADH4 (377 aa).

Position 47 (Cys47) interacts with Zn(2+). Thr49 contacts NAD(+). Positions 68, 98, 101, 104, 112, and 179 each coordinate Zn(2+). NAD(+) is bound by residues 204 to 209 (GLGCVG), Asp228, Lys233, 297 to 299 (VGA), 320 to 322 (TFF), and Arg372.

Belongs to the zinc-containing alcohol dehydrogenase family. Class-II subfamily. Dimer. The cofactor is Zn(2+). Liver specific.

The protein localises to the cytoplasm. It catalyses the reaction all-trans-retinol + NAD(+) = all-trans-retinal + NADH + H(+). It carries out the reaction 9-cis-retinol + NAD(+) = 9-cis-retinal + NADH + H(+). The catalysed reaction is 20-hydroxy-(5Z,8Z,11Z,14Z)-eicosatetraenoate + NAD(+) = 20-oxo-(5Z,8Z,11Z,14Z)-eicosatetraenoate + NADH + H(+). The enzyme catalyses 20-oxo-(5Z,8Z,11Z,14Z)-eicosatetraenoate + NAD(+) + H2O = (5Z,8Z,11Z,14Z)-eicosatetraenedioate + NADH + 2 H(+). It catalyses the reaction 1,4-benzoquinone + NADH + H(+) = hydroquinone + NAD(+). With respect to regulation, oxidation of 20-HETE is inhibited by low concentrations of N-heptylformamide. Oxidation of 20-HETE is a decreased by 55-65% by either all-trans-retinol or all-trans-retinoic acid. Strongly inhibited by omega-hydroxy fatty acids. Catalyzes the NAD-dependent oxidation of either all-trans-retinol or 9-cis-retinol. Also oxidizes long chain omega-hydroxy fatty acids, such as 20-HETE, producing both the intermediate aldehyde, 20-oxoarachidonate and the end product, a dicarboxylic acid, (5Z,8Z,11Z,14Z)-eicosatetraenedioate. Also catalyzes the reduction of benzoquinones. The sequence is that of All-trans-retinol dehydrogenase [NAD(+)] ADH4 from Mus musculus (Mouse).